The primary structure comprises 78 residues: RNA-binding protein KhpA (78 aa).

The KH domain occupies 29–78 (TIIYELTVAKPDIGKIIGKEGRTIKAIRTLLVSVASRNNVKVSLEIMEDK).

It belongs to the KhpA RNA-binding protein family.

It is found in the cytoplasm. A probable RNA-binding protein. This is RNA-binding protein KhpA from Chlamydia caviae (strain ATCC VR-813 / DSM 19441 / 03DC25 / GPIC) (Chlamydophila caviae).